We begin with the raw amino-acid sequence, 487 residues long: Serralysin (487 aa).

Positions 1 to 16 (MQSTKKAIEITESNFA) are excised as a propeptide. His192 contacts Zn(2+). The active site involves Glu193. 3 residues coordinate Zn(2+): His196, His202, and Tyr232. 32 residues coordinate Ca(2+): Arg269, Gly271, Thr273, Asp301, Gly303, Gly304, Asp306, Thr343, Glu345, Gly350, Gly352, Asp354, Asn359, Ala361, Asn363, Gly367, Gly368, Ala369, Asp372, Gly376, Gly377, Gly378, Gly379, Asp381, Gly385, Gly386, Ala387, Gly388, Asp390, Asp399, Asp406, and Asp416. 2 Hemolysin-type calcium-binding repeats span residues 348-365 (IGGS…NNVL) and 366-383 (KGGA…ADEL).

Belongs to the peptidase M10B family. Requires Ca(2+) as cofactor. It depends on Zn(2+) as a cofactor.

It localises to the secreted. The catalysed reaction is Preferential cleavage of bonds with hydrophobic residues in P1'.. Functionally, naturally present in the silkworm intestine and allows the emerging moth to dissolve its cocoon. This chain is Serralysin, found in Serratia marcescens (strain ATCC 21074 / E-15).